Reading from the N-terminus, the 271-residue chain is Aspartate/glutamate leucyltransferase (271 aa).

This sequence belongs to the R-transferase family. Bpt subfamily.

It is found in the cytoplasm. The catalysed reaction is N-terminal L-glutamyl-[protein] + L-leucyl-tRNA(Leu) = N-terminal L-leucyl-L-glutamyl-[protein] + tRNA(Leu) + H(+). The enzyme catalyses N-terminal L-aspartyl-[protein] + L-leucyl-tRNA(Leu) = N-terminal L-leucyl-L-aspartyl-[protein] + tRNA(Leu) + H(+). Functions in the N-end rule pathway of protein degradation where it conjugates Leu from its aminoacyl-tRNA to the N-termini of proteins containing an N-terminal aspartate or glutamate. This Acinetobacter baylyi (strain ATCC 33305 / BD413 / ADP1) protein is Aspartate/glutamate leucyltransferase.